Consider the following 469-residue polypeptide: Putative dipeptidase SSP1012 (469 aa).

Zn(2+) is bound at residue His-84. Asp-86 is an active-site residue. Asp-115 contacts Zn(2+). Glu-149 functions as the Proton acceptor in the catalytic mechanism. 3 residues coordinate Zn(2+): Glu-150, Asp-173, and His-440.

This sequence belongs to the peptidase M20A family. Zn(2+) serves as cofactor.

This chain is Putative dipeptidase SSP1012, found in Staphylococcus saprophyticus subsp. saprophyticus (strain ATCC 15305 / DSM 20229 / NCIMB 8711 / NCTC 7292 / S-41).